The sequence spans 263 residues: Thiazole synthase (263 aa).

The active-site Schiff-base intermediate with DXP is the lysine 100. 1-deoxy-D-xylulose 5-phosphate is bound by residues glycine 161, 187–188 (AG), and 209–210 (NT).

The protein belongs to the ThiG family. In terms of assembly, homotetramer. Forms heterodimers with either ThiH or ThiS.

It is found in the cytoplasm. It catalyses the reaction [ThiS sulfur-carrier protein]-C-terminal-Gly-aminoethanethioate + 2-iminoacetate + 1-deoxy-D-xylulose 5-phosphate = [ThiS sulfur-carrier protein]-C-terminal Gly-Gly + 2-[(2R,5Z)-2-carboxy-4-methylthiazol-5(2H)-ylidene]ethyl phosphate + 2 H2O + H(+). It functions in the pathway cofactor biosynthesis; thiamine diphosphate biosynthesis. Its function is as follows. Catalyzes the rearrangement of 1-deoxy-D-xylulose 5-phosphate (DXP) to produce the thiazole phosphate moiety of thiamine. Sulfur is provided by the thiocarboxylate moiety of the carrier protein ThiS. In vitro, sulfur can be provided by H(2)S. This is Thiazole synthase from Shouchella clausii (strain KSM-K16) (Alkalihalobacillus clausii).